A 150-amino-acid chain; its full sequence is UPF0540 protein At1g62080 (150 aa).

An N-terminal signal peptide occupies residues 1 to 21 (MNATKFLVLLVIGVLCAIVTA). The segment covering 119–135 (AAAARAKGKVASASRVK) has biased composition (low complexity). The disordered stretch occupies residues 119-150 (AAAARAKGKVASASRVKGSSEKKKKDRKGKKD).

Belongs to the UPF0540 family.

The protein is UPF0540 protein At1g62080 of Arabidopsis thaliana (Mouse-ear cress).